Here is a 922-residue protein sequence, read N- to C-terminus: Protein translocase subunit SecA (922 aa).

ATP-binding positions include Gln-87, 105–109 (GEGKT), and Asp-516. The tract at residues 867–912 (YTAPTETGEPETLPDPRTAGAGGDGLNLPEGVRIGRNDPCPCGSGK) is disordered. Cys-906, Cys-908, Cys-917, and His-918 together coordinate Zn(2+).

Belongs to the SecA family. Monomer and homodimer. Part of the essential Sec protein translocation apparatus which comprises SecA, SecYEG and auxiliary proteins SecDF-YajC and YidC. It depends on Zn(2+) as a cofactor.

It is found in the cell inner membrane. The protein resides in the cytoplasm. The catalysed reaction is ATP + H2O + cellular proteinSide 1 = ADP + phosphate + cellular proteinSide 2.. In terms of biological role, part of the Sec protein translocase complex. Interacts with the SecYEG preprotein conducting channel. Has a central role in coupling the hydrolysis of ATP to the transfer of proteins into and across the cell membrane, serving both as a receptor for the preprotein-SecB complex and as an ATP-driven molecular motor driving the stepwise translocation of polypeptide chains across the membrane. The polypeptide is Protein translocase subunit SecA (Paracidovorax citrulli (strain AAC00-1) (Acidovorax citrulli)).